The sequence spans 396 residues: Pre-mRNA-splicing regulator WTAP (396 aa).

At Met1 the chain carries N-acetylmethionine. A Phosphoserine modification is found at Ser14. Composition is skewed to low complexity over residues 240-257 and 278-291; these read QQQQ…TTSS and SNGS…SGSG. The disordered stretch occupies residues 240–396; sequence QQQQSQASAP…SSVNVQGAVL (157 aa). Phosphoserine occurs at positions 297, 305, 306, and 341. Low complexity predominate over residues 305-316; sequence SSSGNGNKASNS. Positions 340-351 are enriched in polar residues; sequence DSPTGSENSLTH. A Phosphothreonine modification is found at Thr350. Basic and acidic residues predominate over residues 352-368; it reads HSNDTDSSHDPQEEKAV. Positions 380 to 396 are enriched in polar residues; sequence HVQNGLDSSVNVQGAVL. Ser388 is subject to Phosphoserine.

This sequence belongs to the fl(2)d family. Component of the WMM complex, a N6-methyltransferase complex composed of a catalytic subcomplex, named MAC, and of an associated subcomplex, named MACOM. The MAC subcomplex is composed of METTL3 and METTL14. The MACOM subcomplex is composed of WTAP, ZC3H13, CBLL1/HAKAI, VIRMA, and, in some cases of RBM15 (RBM15 or RBM15B). Interacts with WT1. Also a component of a MACOM-like complex, named WTAP complex, composed of WTAP, ZC3H13, CBLL1, VIRMA, RBM15, BCLAF1 and THRAP3. Interacts with CPNE4 (via VWFA domain).

Its subcellular location is the nucleus speckle. It localises to the nucleus. The protein resides in the nucleoplasm. The protein localises to the cytoplasm. In terms of biological role, associated component of the WMM complex, a complex that mediates N6-methyladenosine (m6A) methylation of RNAs, a modification that plays a role in the efficiency of mRNA splicing and RNA processing. Acts as a key regulator of m6A methylation by promoting m6A methylation of mRNAs at the 3'-UTR. Required for accumulation of METTL3 and METTL14 to nuclear speckle. Acts as a mRNA splicing regulator. Regulates G2/M cell-cycle transition by binding to the 3' UTR of CCNA2, which enhances its stability. Impairs WT1 DNA-binding ability and inhibits expression of WT1 target genes. The sequence is that of Pre-mRNA-splicing regulator WTAP from Mus musculus (Mouse).